A 469-amino-acid polypeptide reads, in one-letter code: Fe(3+)-Zn(2+) purple acid phosphatase 12 (469 aa).

Residues 1–28 (MSSRSDLKIKRVSLIIFLLSVLVEFCYG) form the signal peptide. The N-linked (GlcNAc...) asparagine glycan is linked to N114. A Fe cation-binding site is contributed by D168. N176 carries an N-linked (GlcNAc...) asparagine glycan. Residues D197 and Y200 each contribute to the Fe cation site. D197 is a binding site for Zn(2+). Residue N234 coordinates Zn(2+). Residue N234 participates in substrate binding. N-linked (GlcNAc...) asparagine glycosylation occurs at N307. H319 lines the Zn(2+) pocket. Residue H329 is the Proton donor of the active site. H356 contacts Zn(2+). 356-358 (HVH) contributes to the substrate binding site. Residue H358 participates in Fe cation binding. N429 is a glycosylation site (N-linked (GlcNAc...) asparagine).

Belongs to the metallophosphoesterase superfamily. Purple acid phosphatase family. As to quaternary structure, homodimer; disulfide-linked. Requires Fe cation as cofactor. Zn(2+) serves as cofactor. Expressed in roots, stems, leaves, flowers and siliques.

Its subcellular location is the secreted. It carries out the reaction a phosphate monoester + H2O = an alcohol + phosphate. The chain is Fe(3+)-Zn(2+) purple acid phosphatase 12 (PAP12) from Arabidopsis thaliana (Mouse-ear cress).